A 163-amino-acid polypeptide reads, in one-letter code: NADH-quinone oxidoreductase subunit I (163 aa).

4Fe-4S ferredoxin-type domains lie at 53–83 (LRRY…IEAG) and 94–123 (VRYD…EGPN). Residues Cys-63, Cys-66, Cys-69, Cys-73, Cys-103, Cys-106, Cys-109, and Cys-113 each coordinate [4Fe-4S] cluster.

The protein belongs to the complex I 23 kDa subunit family. NDH-1 is composed of 14 different subunits. Subunits NuoA, H, J, K, L, M, N constitute the membrane sector of the complex. [4Fe-4S] cluster serves as cofactor.

It is found in the cell inner membrane. The catalysed reaction is a quinone + NADH + 5 H(+)(in) = a quinol + NAD(+) + 4 H(+)(out). Its function is as follows. NDH-1 shuttles electrons from NADH, via FMN and iron-sulfur (Fe-S) centers, to quinones in the respiratory chain. The immediate electron acceptor for the enzyme in this species is believed to be ubiquinone. Couples the redox reaction to proton translocation (for every two electrons transferred, four hydrogen ions are translocated across the cytoplasmic membrane), and thus conserves the redox energy in a proton gradient. This Brucella melitensis biotype 1 (strain ATCC 23456 / CCUG 17765 / NCTC 10094 / 16M) protein is NADH-quinone oxidoreductase subunit I.